Reading from the N-terminus, the 505-residue chain is Maturase K (505 aa).

Belongs to the intron maturase 2 family. MatK subfamily.

It localises to the plastid. The protein localises to the chloroplast. Usually encoded in the trnK tRNA gene intron. Probably assists in splicing its own and other chloroplast group II introns. In Sciadopitys verticillata (Japanese umbrella-pine), this protein is Maturase K.